Here is a 486-residue protein sequence, read N- to C-terminus: Membrane-bound lytic murein transglycosylase F (486 aa).

The signal sequence occupies residues 1-26 (MFSPMALRPRCAKWLIVTGLFLMLGA). Residues 27-267 (CVEKPSTLER…RLKDRYYGHV (241 aa)) are non-LT domain. The LT domain stretch occupies residues 268 to 486 (DVLGYVGAYT…TKPPEENPPL (219 aa)). E314 is an active-site residue. A disordered region spans residues 464-486 (VAEGNLHVPGVNKTKPPEENPPL).

The protein in the N-terminal section; belongs to the bacterial solute-binding protein 3 family. This sequence in the C-terminal section; belongs to the transglycosylase Slt family.

The protein resides in the cell outer membrane. It catalyses the reaction Exolytic cleavage of the (1-&gt;4)-beta-glycosidic linkage between N-acetylmuramic acid (MurNAc) and N-acetylglucosamine (GlcNAc) residues in peptidoglycan, from either the reducing or the non-reducing ends of the peptidoglycan chains, with concomitant formation of a 1,6-anhydrobond in the MurNAc residue.. Murein-degrading enzyme that degrades murein glycan strands and insoluble, high-molecular weight murein sacculi, with the concomitant formation of a 1,6-anhydromuramoyl product. Lytic transglycosylases (LTs) play an integral role in the metabolism of the peptidoglycan (PG) sacculus. Their lytic action creates space within the PG sacculus to allow for its expansion as well as for the insertion of various structures such as secretion systems and flagella. In Pseudomonas fluorescens (strain ATCC BAA-477 / NRRL B-23932 / Pf-5), this protein is Membrane-bound lytic murein transglycosylase F.